The chain runs to 364 residues: 3-dehydroquinate synthase (364 aa).

NAD(+)-binding positions include 71–76 (DGEQYK), 105–109 (GVIGD), 129–130 (TT), Lys142, Lys151, and 169–172 (CLKT). Zn(2+) contacts are provided by Glu184, His247, and His264.

The protein belongs to the sugar phosphate cyclases superfamily. Dehydroquinate synthase family. The cofactor is Co(2+). Zn(2+) serves as cofactor. NAD(+) is required as a cofactor.

It localises to the cytoplasm. The enzyme catalyses 7-phospho-2-dehydro-3-deoxy-D-arabino-heptonate = 3-dehydroquinate + phosphate. The protein operates within metabolic intermediate biosynthesis; chorismate biosynthesis; chorismate from D-erythrose 4-phosphate and phosphoenolpyruvate: step 2/7. Functionally, catalyzes the conversion of 3-deoxy-D-arabino-heptulosonate 7-phosphate (DAHP) to dehydroquinate (DHQ). The sequence is that of 3-dehydroquinate synthase from Klebsiella pneumoniae (strain 342).